The chain runs to 34 residues: Photosystem II reaction center protein M (34 aa).

Residues 5 to 25 traverse the membrane as a helical segment; the sequence is ILAFIATALFILVPTAFLLII.

Belongs to the PsbM family. As to quaternary structure, PSII is composed of 1 copy each of membrane proteins PsbA, PsbB, PsbC, PsbD, PsbE, PsbF, PsbH, PsbI, PsbJ, PsbK, PsbL, PsbM, PsbT, PsbX, PsbY, PsbZ, Psb30/Ycf12, at least 3 peripheral proteins of the oxygen-evolving complex and a large number of cofactors. It forms dimeric complexes.

The protein localises to the plastid. The protein resides in the chloroplast thylakoid membrane. Its function is as follows. One of the components of the core complex of photosystem II (PSII). PSII is a light-driven water:plastoquinone oxidoreductase that uses light energy to abstract electrons from H(2)O, generating O(2) and a proton gradient subsequently used for ATP formation. It consists of a core antenna complex that captures photons, and an electron transfer chain that converts photonic excitation into a charge separation. This subunit is found at the monomer-monomer interface. This chain is Photosystem II reaction center protein M, found in Calycanthus floridus var. glaucus (Eastern sweetshrub).